Consider the following 204-residue polypeptide: INSIG protein homolog (204 aa).

5 helical membrane passes run isoleucine 5–valine 27, phenylalanine 47–arginine 64, alanine 76–histidine 97, valine 101–valine 118, and glycine 124–leucine 145. Histidine 26 contributes to the a 1,2-diacyl-sn-glycerol binding site. Tyrosine 150 serves as a coordination point for a 1,2-diacyl-sn-glycerol. Residues proline 162–glycine 179 traverse the membrane as a helical segment.

It belongs to the INSIG family. As to quaternary structure, homotrimer.

It localises to the membrane. Its function is as follows. Diacylglycerol-binding protein. This chain is INSIG protein homolog, found in Mycolicibacterium vanbaalenii (strain DSM 7251 / JCM 13017 / BCRC 16820 / KCTC 9966 / NRRL B-24157 / PYR-1) (Mycobacterium vanbaalenii).